The primary structure comprises 276 residues: tRNA dimethylallyltransferase (276 aa).

The interval 9-12 (DSLS) is interaction with substrate tRNA.

The protein belongs to the IPP transferase family. As to quaternary structure, monomer. The cofactor is Mg(2+).

The catalysed reaction is adenosine(37) in tRNA + dimethylallyl diphosphate = N(6)-dimethylallyladenosine(37) in tRNA + diphosphate. Functionally, catalyzes the transfer of a dimethylallyl group onto the adenine at position 37 in tRNAs that read codons beginning with uridine, leading to the formation of N6-(dimethylallyl)adenosine (i(6)A). The sequence is that of tRNA dimethylallyltransferase (miaA) from Helicobacter pylori (strain HPAG1).